We begin with the raw amino-acid sequence, 253 residues long: Small ribosomal subunit protein uS3 (253 aa).

The region spanning 38-106 (IRKYIHARLS…EVQINIFEIK (69 aa)) is the KH type-2 domain. Residues 216-253 (AGMDKKQAGQGGGKGGDSPRGDRKPFNKGGKPDARKRK) are disordered. Over residues 232-253 (DSPRGDRKPFNKGGKPDARKRK) the composition is skewed to basic and acidic residues.

The protein belongs to the universal ribosomal protein uS3 family. In terms of assembly, part of the 30S ribosomal subunit. Forms a tight complex with proteins S10 and S14.

Functionally, binds the lower part of the 30S subunit head. Binds mRNA in the 70S ribosome, positioning it for translation. This Flavobacterium psychrophilum (strain ATCC 49511 / DSM 21280 / CIP 103535 / JIP02/86) protein is Small ribosomal subunit protein uS3.